Here is a 645-residue protein sequence, read N- to C-terminus: Minor extracellular protease Epr (645 aa).

The signal sequence occupies residues 1 to 27; sequence MKNMSCKLVVSVTLFFSFLTIGPLAHA. Positions 28–103 are excised as a propeptide; sequence QNSSEKEVIV…AADSTDFKVL (76 aa). The region spanning 115 to 382 is the Peptidase S8 domain; it reads QWNLEPIQVK…YGLIQYKAQA (268 aa). Catalysis depends on charge relay system residues Asp-142, His-172, and Ser-326. Disordered stretches follow at residues 490-577 and 591-645; these read KQAK…KTAL and AEAK…KPKK. Residues 491–508 show a composition bias toward basic and acidic residues; sequence QAKDKVAKAEKSKKKTDV. Residues 522-547 are compositionally biased toward polar residues; it reads SEKTSLQKRLNKVKSTNLKTAQQSVS. Residues 592 to 610 are compositionally biased toward basic and acidic residues; the sequence is EAKKVETAKAKVKKAEKDK.

The protein belongs to the peptidase S8 family. May undergo two steps of processing in its passage through the cell membrane: removal of the N-terminal signal sequence and cleavage of the C-terminal domain. Several active forms of Epr with molecular masses between 40 and 34 kDa were found in the medium of B.subtilis cultures. The size variation of the active forms expressed by the complete epr gene appears to be the result of partial removal of the C-terminus either by processing or degradation.

It is found in the secreted. Its subcellular location is the cell wall. Requires Ca(2+) for stability. Activity is inhibited by phenylmethylsulfonyl fluoride (PMSF) and EDTA. Its function is as follows. Serine protease. Involved in the production of the competence and sporulation stimulating factor CSF. In addition, is essential for swarming motility. Plays a key role in DegU-mediated swarming motility. The protease activity is dispensable for swarming. Not essential for growth or sporulation. This is Minor extracellular protease Epr from Bacillus subtilis (strain 168).